A 57-amino-acid chain; its full sequence is Large ribosomal subunit protein bL33 (57 aa).

Belongs to the bacterial ribosomal protein bL33 family.

The polypeptide is Large ribosomal subunit protein bL33 (Akkermansia muciniphila (strain ATCC BAA-835 / DSM 22959 / JCM 33894 / BCRC 81048 / CCUG 64013 / CIP 107961 / Muc)).